The sequence spans 521 residues: Probable ATP-dependent RNA helicase Dbp45A (521 aa).

A Q motif motif is present at residues Asn7–Gln35. One can recognise a Helicase ATP-binding domain in the interval Ile38–Glu209. Ala51 to Thr58 is an ATP binding site. The DEAD box motif lies at Asp157–Asp160. The 150-residue stretch at Val237–Glu386 folds into the Helicase C-terminal domain. Positions Lys448–Ala521 are disordered. 2 stretches are compositionally biased toward basic and acidic residues: residues Glu460–Lys482 and Leu502–Ala521.

This sequence belongs to the DEAD box helicase family. DDX49/DBP8 subfamily.

The catalysed reaction is ATP + H2O = ADP + phosphate + H(+). Functionally, probable ATP-binding RNA helicase. The sequence is that of Probable ATP-dependent RNA helicase Dbp45A (Dbp45A) from Drosophila melanogaster (Fruit fly).